We begin with the raw amino-acid sequence, 537 residues long: Periplasmic murein peptide-binding protein MppA (537 aa).

Residues 1 to 22 (MKHSVSVTCCALLVSSISLSYA) form the signal peptide. Positions 42, 54, 56, 289, 424, 435, 437, 439, and 506 each coordinate L-alanyl-gamma-D-glutamyl-meso-2,6-diaminopimelate.

This sequence belongs to the bacterial solute-binding protein 5 family. As to quaternary structure, the complex is composed of two ATP-binding proteins (OppD and OppF), two transmembrane proteins (OppB and OppC) and a solute-binding protein (MppA).

The protein resides in the periplasm. Part of the ABC transporter complex MppA-OppBCDF involved in the uptake of the cell wall murein tripeptide L-alanyl-gamma-D-glutamyl-meso-diaminopimelate. Is involved in the recycling of cell wall peptides. Binds the cell wall peptide L-Ala-D-Gly-gamma-meso-diaminopimelic acid. Can also transport ordinary alpha-linked tripeptides such as Pro-Phe-Lys, but with much lower efficiency than OppA. Cannot bind typical tripeptides such as Lys-Glu-Lys, Lys-Lys-Lys or Ala-Ala-Ala. This chain is Periplasmic murein peptide-binding protein MppA, found in Escherichia coli (strain K12).